The chain runs to 632 residues: Biosynthetic arginine decarboxylase (632 aa).

N6-(pyridoxal phosphate)lysine is present on Lys101. 281-291 contributes to the substrate binding site; it reads FDVGGGLGVDY.

It belongs to the Orn/Lys/Arg decarboxylase class-II family. SpeA subfamily. It depends on Mg(2+) as a cofactor. The cofactor is pyridoxal 5'-phosphate.

The catalysed reaction is L-arginine + H(+) = agmatine + CO2. It participates in amine and polyamine biosynthesis; agmatine biosynthesis; agmatine from L-arginine: step 1/1. In terms of biological role, catalyzes the biosynthesis of agmatine from arginine. The protein is Biosynthetic arginine decarboxylase of Klebsiella pneumoniae (strain 342).